A 59-amino-acid chain; its full sequence is Putative zinc finger protein ORF59a (59 aa).

A C2H2-type; degenerate zinc finger spans residues 11–33 (YQCLRCGLTFRTKKQLIRHLVNT).

The protein is Putative zinc finger protein ORF59a of Acidianus hospitalis (AFV-1).